A 552-amino-acid chain; its full sequence is Keratin, type II cytoskeletal 6A (552 aa).

The segment covering 1-14 (MSTKTVIRSQTSHR) has biased composition (polar residues). The segment at 1–21 (MSTKTVIRSQTSHRGFSAGSA) is disordered. Residues 1-151 (MSTKTVIRSQ…DPTIQRVRTE (151 aa)) form a head region. Positions 152–187 (EREQIKTLNNKFASFIDKVRFLEQQNKVLDTKWALL) are coil 1A. Positions 152–465 (EREQIKTLNN…TLLEGEECRL (314 aa)) constitute an IF rod domain. A linker 1 region spans residues 188–206 (QEQGTKTVRQGLETLFEQY). Positions 207–298 (INDLRKELDN…ALYEAELSQM (92 aa)) are coil 1B. The tract at residues 299–322 (QTHISDTSVVLSMDNNRSLDLDSI) is linker 12. The coil 2 stretch occupies residues 323–461 (IAEVKAQYEE…ATYRTLLEGE (139 aa)). The tract at residues 462–552 (ECRLNGEGVG…TSSTRKSYRP (91 aa)) is tail. The disordered stretch occupies residues 524 to 552 (ISSGLSSSGGSSSTIKYTTTSSTRKSYRP). Residues 525–552 (SSGLSSSGGSSSTIKYTTTSSTRKSYRP) are compositionally biased toward low complexity.

This sequence belongs to the intermediate filament family. As to quaternary structure, heterodimer of a type I and a type II keratin. KRT6 isomers associate with KRT16 and/or KRT17. Interacts with TCHP.

Functionally, epidermis-specific type I keratin involved in wound healing. Involved in the activation of follicular keratinocytes after wounding, while it does not play a major role in keratinocyte proliferation or migration. Participates in the regulation of epithelial migration by inhibiting the activity of SRC during wound repair. The protein is Keratin, type II cytoskeletal 6A (Krt6a) of Rattus norvegicus (Rat).